The primary structure comprises 1250 residues: TBC1 domain family member 9B (1250 aa).

GRAM domains lie at 142-209 (LKMR…EKNA) and 288-356 (ECYR…EKAD). Position 397 is a phosphothreonine (T397). Residues 397–443 (TPSKQPGSIGSRKASVVDPSTESSPAPQEGSEQPASPASPLSSRQSF) are disordered. Phosphoserine is present on residues S411, S432, S435, and S463. Over residues 414 to 443 (DPSTESSPAPQEGSEQPASPASPLSSRQSF) the composition is skewed to polar residues. Residues 508–695 (GIPESLRGEL…VIVDCFFYEG (188 aa)) form the Rab-GAP TBC domain. A helical transmembrane segment spans residues 668 to 688 (LSWFLTLFLSVMPFESAVVIV). The region spanning 879–914 (HTPLLAGRMFRLLDENKDSLINFKEFVTGMSGMYHG) is the EF-hand domain. 3 disordered regions span residues 974-999 (LPQEEQEGSGSEERGEEKGTSSPDYR), 1069-1093 (SARTGRKPRDCATEEDEPPAPELHQ), and 1128-1157 (VEGGSGEGQGSPSQLLSDDETKDDMSMSSY). A compositionally biased stretch (basic and acidic residues) spans 984–999 (SEERGEEKGTSSPDYR). At S1241 the chain carries Phosphoserine.

It is found in the membrane. May act as a GTPase-activating protein for Rab family protein(s). In Homo sapiens (Human), this protein is TBC1 domain family member 9B (TBC1D9B).